Here is a 181-residue protein sequence, read N- to C-terminus: Glutamyl-tRNA(Gln) amidotransferase subunit C, chloroplastic/mitochondrial (181 aa).

The protein belongs to the GatC family. In terms of assembly, subunit of the heterotrimeric GatCAB amidotransferase (AdT) complex, composed of A, B and C subunits.

It is found in the mitochondrion. The protein localises to the plastid. The protein resides in the chloroplast. It catalyses the reaction L-glutamyl-tRNA(Gln) + L-glutamine + ATP + H2O = L-glutaminyl-tRNA(Gln) + L-glutamate + ADP + phosphate + H(+). In terms of biological role, allows the formation of correctly charged Gln-tRNA(Gln) through the transamidation of misacylated Glu-tRNA(Gln) in chloroplasts and mitochondria. The reaction takes place in the presence of glutamine and ATP through an activated gamma-phospho-Glu-tRNA(Gln). This Picea sitchensis (Sitka spruce) protein is Glutamyl-tRNA(Gln) amidotransferase subunit C, chloroplastic/mitochondrial.